The chain runs to 296 residues: Ribosomal RNA small subunit methyltransferase H (296 aa).

S-adenosyl-L-methionine contacts are provided by residues 38–40 (GVH), Glu-57, Phe-80, Asp-103, and His-110.

This sequence belongs to the methyltransferase superfamily. RsmH family.

The protein localises to the cytoplasm. It carries out the reaction cytidine(1402) in 16S rRNA + S-adenosyl-L-methionine = N(4)-methylcytidine(1402) in 16S rRNA + S-adenosyl-L-homocysteine + H(+). Specifically methylates the N4 position of cytidine in position 1402 (C1402) of 16S rRNA. In Borreliella burgdorferi (strain ATCC 35210 / DSM 4680 / CIP 102532 / B31) (Borrelia burgdorferi), this protein is Ribosomal RNA small subunit methyltransferase H.